The primary structure comprises 349 residues: tRNA pseudouridine synthase D (349 aa).

Phe-27 serves as a coordination point for substrate. Asp-80 serves as the catalytic Nucleophile. Asn-129 is a substrate binding site. Residues 155–303 (GVPNYFGAQR…VEAARRAMLL (149 aa)) form the TRUD domain. Residue Phe-329 participates in substrate binding.

The protein belongs to the pseudouridine synthase TruD family.

The enzyme catalyses uridine(13) in tRNA = pseudouridine(13) in tRNA. Responsible for synthesis of pseudouridine from uracil-13 in transfer RNAs. In Shigella boydii serotype 4 (strain Sb227), this protein is tRNA pseudouridine synthase D.